A 375-amino-acid chain; its full sequence is Protein RecA (375 aa).

Residues 1–20 (MPAEMKSAASGSDPRSSGER) are disordered. An ATP-binding site is contributed by 79-86 (GPESSGKT).

It belongs to the RecA family.

It is found in the cytoplasm. Its function is as follows. Can catalyze the hydrolysis of ATP in the presence of single-stranded DNA, the ATP-dependent uptake of single-stranded DNA by duplex DNA, and the ATP-dependent hybridization of homologous single-stranded DNAs. It interacts with LexA causing its activation and leading to its autocatalytic cleavage. The sequence is that of Protein RecA from Parasynechococcus marenigrum (strain WH8102).